Reading from the N-terminus, the 242-residue chain is Ribonuclease PH (242 aa).

Residues Arg-90 and 128-130 (GTR) contribute to the phosphate site.

The protein belongs to the RNase PH family. Homohexameric ring arranged as a trimer of dimers.

It catalyses the reaction tRNA(n+1) + phosphate = tRNA(n) + a ribonucleoside 5'-diphosphate. In terms of biological role, phosphorolytic 3'-5' exoribonuclease that plays an important role in tRNA 3'-end maturation. Removes nucleotide residues following the 3'-CCA terminus of tRNAs; can also add nucleotides to the ends of RNA molecules by using nucleoside diphosphates as substrates, but this may not be physiologically important. Probably plays a role in initiation of 16S rRNA degradation (leading to ribosome degradation) during starvation. This Nocardioides sp. (strain ATCC BAA-499 / JS614) protein is Ribonuclease PH.